The primary structure comprises 841 residues: Probable outer membrane usher protein EcpC (841 aa).

Positions 1–29 (MPLRRFSPGLKAQFAFGMVFLFVQPDASA) are cleaved as a signal peptide.

Belongs to the EcpC/MatD family.

Functionally, part of the ecpRABCDE operon, which encodes the E.coli common pilus (ECP). ECP is found in both commensal and pathogenic strains and plays a dual role in early-stage biofilm development and host cell recognition. This is Probable outer membrane usher protein EcpC (ecpC) from Escherichia coli O18:K1:H7 (strain IHE3034 / ExPEC).